The primary structure comprises 1374 residues: Probable ATP-dependent RNA helicase spindle-E (1374 aa).

Residues 46–212 form the Helicase ATP-binding domain; the sequence is LARIRENPVI…FKTPKKVGYL (167 aa). 59–66 contacts ATP; that stretch reads GPTGCGKT. A DEAH box motif is present at residues 158–161; it reads DEIH. The region spanning 265 to 447 is the Helicase C-terminal domain; it reads VCDRLIENMH…NVILKAKLLE (183 aa). The region spanning 866-931 is the Tudor domain; it reads QFAVGQMVAA…RKLDGPLAYM (66 aa).

It belongs to the DEAD box helicase family. DEAH subfamily.

Its subcellular location is the cytoplasm. The catalysed reaction is ATP + H2O = ADP + phosphate + H(+). Its function is as follows. Probable ATP-binding RNA helicase which plays a central role during gametogenesis by repressing transposable elements and preventing their mobilization, which is essential for the germline integrity. Acts via the piRNA metabolic process, which mediates the repression of transposable elements during meiosis by forming complexes composed of piRNAs and Piwi proteins and govern the methylation and subsequent repression of transposons. The polypeptide is Probable ATP-dependent RNA helicase spindle-E (spn-E) (Aedes aegypti (Yellowfever mosquito)).